A 428-amino-acid chain; its full sequence is Small ribosomal subunit protein uS2m (428 aa).

Residues 30–50 (FLSQDNFTAPPPPPTNSKKQA) are disordered.

The protein belongs to the universal ribosomal protein uS2 family. Component of the mitochondrial small ribosomal subunit (mt-SSU). Mature N.crassa 74S mitochondrial ribosomes consist of a small (37S) and a large (54S) subunit. The 37S small subunit contains a 16S ribosomal RNA (16S mt-rRNA) and 32 different proteins. The 54S large subunit contains a 23S rRNA (23S mt-rRNA) and 42 different proteins.

It is found in the mitochondrion. In terms of biological role, component of the mitochondrial ribosome (mitoribosome), a dedicated translation machinery responsible for the synthesis of mitochondrial genome-encoded proteins, including at least some of the essential transmembrane subunits of the mitochondrial respiratory chain. The mitoribosomes are attached to the mitochondrial inner membrane and translation products are cotranslationally integrated into the membrane. The sequence is that of Small ribosomal subunit protein uS2m (mrp4) from Neurospora crassa (strain ATCC 24698 / 74-OR23-1A / CBS 708.71 / DSM 1257 / FGSC 987).